The primary structure comprises 191 residues: Protein GrpE (191 aa).

The segment at 1 to 22 (MKDKHNQEHDHLSQEEPESCEK) is disordered.

It belongs to the GrpE family. As to quaternary structure, homodimer.

It is found in the cytoplasm. Functionally, participates actively in the response to hyperosmotic and heat shock by preventing the aggregation of stress-denatured proteins, in association with DnaK and GrpE. It is the nucleotide exchange factor for DnaK and may function as a thermosensor. Unfolded proteins bind initially to DnaJ; upon interaction with the DnaJ-bound protein, DnaK hydrolyzes its bound ATP, resulting in the formation of a stable complex. GrpE releases ADP from DnaK; ATP binding to DnaK triggers the release of the substrate protein, thus completing the reaction cycle. Several rounds of ATP-dependent interactions between DnaJ, DnaK and GrpE are required for fully efficient folding. The sequence is that of Protein GrpE from Helicobacter pylori (strain Shi470).